Consider the following 337-residue polypeptide: Outer membrane protein assembly factor BamC (337 aa).

A signal peptide spans 1–16; the sequence is MKKWLFPFAFVATLAG. A lipid anchor (N-palmitoyl cysteine) is attached at cysteine 17. Cysteine 17 carries S-diacylglycerol cysteine lipidation.

This sequence belongs to the BamC family. As to quaternary structure, part of the Bam complex.

The protein resides in the cell outer membrane. Part of the outer membrane protein assembly complex, which is involved in assembly and insertion of beta-barrel proteins into the outer membrane. The chain is Outer membrane protein assembly factor BamC from Pasteurella multocida (strain Pm70).